The sequence spans 312 residues: MTIQLKCLSHTPLRGINDPGAATVAEVDAVLAKAKAEVEAFDPELIVVFAPDHYNGLFYDLMPPFVIATAADSVGDYQTMTGPLSVDKDLALEMAKFILDSDIDIAISHRLQVDHGCTQTLEEMTGSLTRYPVIPIIINSVAPPFGPYRRVRKLGEAVGKFIAKLNKRVLILGTGGLSHEPPVPLLSGANEDIANFLIAGRNPTPEFRAARQARTLATGMIFGKPECELTPLNPEWDQNFMDLLIRGQLDKVDAFDIEEISKAAGRSTHEVRTWVAAFAAMAASGPYNAHQDYYRPINEWIAGYGVVSASQK.

The Proton donor role is filled by histidine 115. The Proton acceptor role is filled by histidine 179.

This sequence belongs to the LigB/MhpB extradiol dioxygenase family. Homotetramer. Fe(2+) serves as cofactor.

It carries out the reaction 3-(2,3-dihydroxyphenyl)propanoate + O2 = (2Z,4E)-2-hydroxy-6-oxonona-2,4-dienedioate + H(+). The enzyme catalyses (2E)-3-(2,3-dihydroxyphenyl)prop-2-enoate + O2 = (2Z,4E,7E)-2-hydroxy-6-oxonona-2,4,7-trienedioate + H(+). It functions in the pathway aromatic compound metabolism; 3-phenylpropanoate degradation. Functionally, catalyzes the non-heme iron(II)-dependent oxidative cleavage of 2,3-dihydroxyphenylpropionic acid and 2,3-dihydroxicinnamic acid into 2-hydroxy-6-ketononadienedioate and 2-hydroxy-6-ketononatrienedioate, respectively. This is 2,3-dihydroxyphenylpropionate/2,3-dihydroxicinnamic acid 1,2-dioxygenase 1 from Dechloromonas aromatica (strain RCB).